We begin with the raw amino-acid sequence, 413 residues long: Hemocyanin type 2 unit e (413 aa).

N17 carries an N-linked (GlcNAc...) (high mannose) asparagine glycan. H49 contacts Cu cation. C55 and C66 are disulfide-bonded. Positions 67-69 (CVH) form a cross-link, 2'-(S-cysteinyl)-histidine (Cys-His). H69 and H78 together coordinate Cu cation. N-linked (GlcNAc...) (high mannose) asparagine glycosylation is present at N127. Disulfide bonds link C179-C246 and C336-C342. Positions 189, 193, and 220 each coordinate Cu cation.

Belongs to the tyrosinase family. Hemocyanin subfamily. Decamers of large identical subunits, each containing 8 globular oxygen-binding functional units. The cofactor is Cu(2+). In terms of tissue distribution, hemolymph.

Its subcellular location is the secreted. It is found in the extracellular space. Hemocyanins are copper-containing oxygen carriers occurring freely dissolved in the hemolymph of many mollusks and arthropods. The protein is Hemocyanin type 2 unit e of Rapana venosa (Veined rapa whelk).